The following is a 136-amino-acid chain: MSFNCSTGNFSRSLGGYLGVPVSTCDSFYPSNVVYSPSTFQLGSTLYSDCQENFFRPVSFQTPCAVTRSFQTSCSHPQNFIFRSPCQTIYTGSLGSGNIGLGSFGCGSTGFQSLGCGSNFCSPTYVSSRSCRSSYY.

It belongs to the PMG family. Interacts with hair keratins.

In the hair cortex, hair keratin intermediate filaments are embedded in an interfilamentous matrix, consisting of hair keratin-associated proteins (KRTAP), which are essential for the formation of a rigid and resistant hair shaft through their extensive disulfide bond cross-linking with abundant cysteine residues of hair keratins. The matrix proteins include the high-sulfur and high-glycine-tyrosine keratins. This Capra hircus (Goat) protein is Keratin-associated protein 15-1 (KRTAP15-1).